Consider the following 273-residue polypeptide: 2,3,4,5-tetrahydropyridine-2,6-dicarboxylate N-succinyltransferase (273 aa).

The substrate site is built by Arg-104 and Asp-141.

The protein belongs to the transferase hexapeptide repeat family. In terms of assembly, homotrimer.

The protein localises to the cytoplasm. The catalysed reaction is (S)-2,3,4,5-tetrahydrodipicolinate + succinyl-CoA + H2O = (S)-2-succinylamino-6-oxoheptanedioate + CoA. The protein operates within amino-acid biosynthesis; L-lysine biosynthesis via DAP pathway; LL-2,6-diaminopimelate from (S)-tetrahydrodipicolinate (succinylase route): step 1/3. This is 2,3,4,5-tetrahydropyridine-2,6-dicarboxylate N-succinyltransferase from Nitrosomonas europaea (strain ATCC 19718 / CIP 103999 / KCTC 2705 / NBRC 14298).